A 407-amino-acid polypeptide reads, in one-letter code: Tryptophan synthase beta chain (407 aa).

Lysine 98 carries the post-translational modification N6-(pyridoxal phosphate)lysine.

The protein belongs to the TrpB family. Tetramer of two alpha and two beta chains. Pyridoxal 5'-phosphate is required as a cofactor.

It carries out the reaction (1S,2R)-1-C-(indol-3-yl)glycerol 3-phosphate + L-serine = D-glyceraldehyde 3-phosphate + L-tryptophan + H2O. It functions in the pathway amino-acid biosynthesis; L-tryptophan biosynthesis; L-tryptophan from chorismate: step 5/5. In terms of biological role, the beta subunit is responsible for the synthesis of L-tryptophan from indole and L-serine. The sequence is that of Tryptophan synthase beta chain from Bradyrhizobium sp. (strain BTAi1 / ATCC BAA-1182).